Here is a 506-residue protein sequence, read N- to C-terminus: Maturase K (506 aa).

This sequence belongs to the intron maturase 2 family. MatK subfamily.

It is found in the plastid. Its subcellular location is the chloroplast. Functionally, usually encoded in the trnK tRNA gene intron. Probably assists in splicing its own and other chloroplast group II introns. The chain is Maturase K from Ocimum basilicum (Sweet basil).